Consider the following 443-residue polypeptide: Serine--tRNA ligase (443 aa).

Residue 250-252 participates in L-serine binding; that stretch reads TSE. 281–283 provides a ligand contact to ATP; the sequence is RSE. Glutamate 304 lines the L-serine pocket. 368–371 lines the ATP pocket; that stretch reads EISS. Residue serine 403 participates in L-serine binding.

Belongs to the class-II aminoacyl-tRNA synthetase family. Type-1 seryl-tRNA synthetase subfamily. In terms of assembly, homodimer. The tRNA molecule binds across the dimer.

The protein localises to the cytoplasm. The enzyme catalyses tRNA(Ser) + L-serine + ATP = L-seryl-tRNA(Ser) + AMP + diphosphate + H(+). It catalyses the reaction tRNA(Sec) + L-serine + ATP = L-seryl-tRNA(Sec) + AMP + diphosphate + H(+). The protein operates within aminoacyl-tRNA biosynthesis; selenocysteinyl-tRNA(Sec) biosynthesis; L-seryl-tRNA(Sec) from L-serine and tRNA(Sec): step 1/1. Catalyzes the attachment of serine to tRNA(Ser). Is also able to aminoacylate tRNA(Sec) with serine, to form the misacylated tRNA L-seryl-tRNA(Sec), which will be further converted into selenocysteinyl-tRNA(Sec). This chain is Serine--tRNA ligase, found in Variovorax paradoxus (strain S110).